Reading from the N-terminus, the 363-residue chain is Ribonuclease D (363 aa).

A 3'-5' exonuclease domain is found at 5–168 (ITHPSELTDR…AIHDELTRRL (164 aa)). The HRDC domain maps to 208 to 288 (EPAAQRRLLR…NTPLPDEEHA (81 aa)).

It belongs to the RNase D family. It depends on a divalent metal cation as a cofactor.

The protein resides in the cytoplasm. The enzyme catalyses Exonucleolytic cleavage that removes extra residues from the 3'-terminus of tRNA to produce 5'-mononucleotides.. Its function is as follows. Exonuclease involved in the 3' processing of various precursor tRNAs. Initiates hydrolysis at the 3'-terminus of an RNA molecule and releases 5'-mononucleotides. This chain is Ribonuclease D, found in Xanthomonas oryzae pv. oryzae (strain KACC10331 / KXO85).